We begin with the raw amino-acid sequence, 406 residues long: DNA primase DnaG (406 aa).

Residues 167 to 253 (DAVVIVEGRA…CVEDLSRRTV (87 aa)) enclose the Toprim domain. The Mg(2+) site is built by Glu-173, Asp-215, and Asp-217. Residues 259-309 (NKTPASAAAPIATTQSETAATDGSATPAPTPEPAPDTAPSPDSDGDDTEAA) form a disordered region. The span at 261-272 (TPASAAAPIATT) shows a compositional bias: low complexity. A compositionally biased stretch (pro residues) spans 286–296 (APTPEPAPDTA).

It belongs to the archaeal DnaG primase family. Forms a ternary complex with MCM helicase and DNA. Mg(2+) is required as a cofactor.

The catalysed reaction is ssDNA + n NTP = ssDNA/pppN(pN)n-1 hybrid + (n-1) diphosphate.. RNA polymerase that catalyzes the synthesis of short RNA molecules used as primers for DNA polymerase during DNA replication. This Halobacterium salinarum (strain ATCC 29341 / DSM 671 / R1) protein is DNA primase DnaG.